Reading from the N-terminus, the 604-residue chain is Glucose oxidase 2 (604 aa).

Positions 1–16 (MKLLGLLSGLVVVATA) are cleaved as a signal peptide. Residues Leu-49 and Thr-50 each contribute to the FAD site. N-linked (GlcNAc...) asparagine glycosylation occurs at Asn-63. Glu-70 contacts FAD. Residue Asn-109 is glycosylated (N-linked (GlcNAc...) asparagine). The FAD site is built by Ser-123, Asn-127, Gly-128, and Ser-130. Cysteines 184 and 226 form a disulfide. The N-linked (GlcNAc...) asparagine glycan is linked to Asn-214. Val-270 provides a ligand contact to FAD. N-linked (GlcNAc...) asparagine glycans are attached at residues Asn-375, Asn-408, and Asn-517. Residue His-536 is the Proton acceptor of the active site. Arg-557 and Val-558 together coordinate O2. Residues Gly-569 and Met-581 each contribute to the FAD site. N-linked (GlcNAc...) asparagine glycosylation occurs at Asn-600.

It belongs to the GMC oxidoreductase family. In terms of assembly, homodimer. FAD is required as a cofactor.

It is found in the secreted. The protein localises to the cell wall. Its subcellular location is the cytoplasm. It localises to the extracellular space. The protein resides in the extracellular matrix. It catalyses the reaction beta-D-glucose + O2 = D-glucono-1,5-lactone + H2O2. Functionally, glucose oxidase catalyzes the oxidation of beta-D-glucose to D-glucono-delta-lactone and hydrogen peroxide in the presence of molecular oxygen. D-glucono-delta-lactone is sequentially hydrolyzed by lactonase to D-gluconic acid, and the resulting hydrogen peroxide is hydrolyzed by catalase to oxygen and water. Acts as a key factor contributing to fungal disease of apple. The production of gluconic acid leads to host tissue acidification that enhances the expression of pectolytic enzymes and the establishment of conditions for necrotrophic development of P.expansum. The chain is Glucose oxidase 2 from Penicillium expansum (Blue mold rot fungus).